The chain runs to 288 residues: N-glycosylase/DNA lyase (288 aa).

Gln-35, Ser-62, and Trp-73 together coordinate 8-oxoguanine. Positions 134–203 are helix-hairpin-helix; that stretch reads NPLVLVERPS…VACASISSEM (70 aa). Lys-160 functions as the Schiff-base intermediate with DNA in the catalytic mechanism. 8-oxoguanine-binding residues include Phe-164 and Pro-189. Residue Asp-191 is part of the active site. Residues Asp-238 and Trp-242 each contribute to the 8-oxoguanine site.

It belongs to the archaeal N-glycosylase/DNA lyase (AGOG) family.

It carries out the reaction 2'-deoxyribonucleotide-(2'-deoxyribose 5'-phosphate)-2'-deoxyribonucleotide-DNA = a 3'-end 2'-deoxyribonucleotide-(2,3-dehydro-2,3-deoxyribose 5'-phosphate)-DNA + a 5'-end 5'-phospho-2'-deoxyribonucleoside-DNA + H(+). In terms of biological role, DNA repair enzyme that is part of the base excision repair (BER) pathway; protects from oxidative damage by removing the major product of DNA oxidation, 8-oxoguanine (GO), from single- and double-stranded DNA substrates. The polypeptide is N-glycosylase/DNA lyase (Aeropyrum pernix (strain ATCC 700893 / DSM 11879 / JCM 9820 / NBRC 100138 / K1)).